Here is a 232-residue protein sequence, read N- to C-terminus: 2,3-bisphosphoglycerate-dependent phosphoglycerate mutase (232 aa).

Substrate is bound by residues 10–17, 23–24, Arg62, 89–92, Lys100, 116–117, and 185–186; these read RHGESIWN, TG, ERHY, RR, and GN. Residue His11 is the Tele-phosphohistidine intermediate of the active site. Glu89 serves as the catalytic Proton donor/acceptor.

The protein belongs to the phosphoglycerate mutase family. BPG-dependent PGAM subfamily. In terms of assembly, homodimer.

The catalysed reaction is (2R)-2-phosphoglycerate = (2R)-3-phosphoglycerate. It participates in carbohydrate degradation; glycolysis; pyruvate from D-glyceraldehyde 3-phosphate: step 3/5. Catalyzes the interconversion of 2-phosphoglycerate and 3-phosphoglycerate. In Buchnera aphidicola subsp. Baizongia pistaciae (strain Bp), this protein is 2,3-bisphosphoglycerate-dependent phosphoglycerate mutase.